Here is a 446-residue protein sequence, read N- to C-terminus: Na(+)-translocating NADH-quinone reductase subunit A (446 aa).

Belongs to the NqrA family. As to quaternary structure, composed of six subunits; NqrA, NqrB, NqrC, NqrD, NqrE and NqrF.

The catalysed reaction is a ubiquinone + n Na(+)(in) + NADH + H(+) = a ubiquinol + n Na(+)(out) + NAD(+). Its function is as follows. NQR complex catalyzes the reduction of ubiquinone-1 to ubiquinol by two successive reactions, coupled with the transport of Na(+) ions from the cytoplasm to the periplasm. NqrA to NqrE are probably involved in the second step, the conversion of ubisemiquinone to ubiquinol. The polypeptide is Na(+)-translocating NADH-quinone reductase subunit A (Histophilus somni (strain 2336) (Haemophilus somnus)).